The chain runs to 261 residues: uncharacterized protein (261 aa).

The next 2 membrane-spanning stretches (helical) occupy residues 4–21 and 33–55; these read RLIA…LIVL and FSIL…LVLF.

Its subcellular location is the cell membrane. This is an uncharacterized protein from Archaeoglobus fulgidus (strain ATCC 49558 / DSM 4304 / JCM 9628 / NBRC 100126 / VC-16).